We begin with the raw amino-acid sequence, 140 residues long: Nucleoside diphosphate kinase (140 aa).

Residues Lys11, Phe59, Arg87, Thr93, Arg104, and Asn114 each coordinate ATP. His117 functions as the Pros-phosphohistidine intermediate in the catalytic mechanism.

The protein belongs to the NDK family. Homotetramer. Mg(2+) is required as a cofactor.

It localises to the cytoplasm. The catalysed reaction is a 2'-deoxyribonucleoside 5'-diphosphate + ATP = a 2'-deoxyribonucleoside 5'-triphosphate + ADP. The enzyme catalyses a ribonucleoside 5'-diphosphate + ATP = a ribonucleoside 5'-triphosphate + ADP. Major role in the synthesis of nucleoside triphosphates other than ATP. The ATP gamma phosphate is transferred to the NDP beta phosphate via a ping-pong mechanism, using a phosphorylated active-site intermediate. In Beijerinckia indica subsp. indica (strain ATCC 9039 / DSM 1715 / NCIMB 8712), this protein is Nucleoside diphosphate kinase.